Consider the following 77-residue polypeptide: Acyl carrier protein (77 aa).

The Carrier domain maps to 2 to 77 (SAIDKRVKEI…DAIDYITEHT (76 aa)). O-(pantetheine 4'-phosphoryl)serine is present on S37.

It belongs to the acyl carrier protein (ACP) family. Post-translationally, 4'-phosphopantetheine is transferred from CoA to a specific serine of apo-ACP by AcpS. This modification is essential for activity because fatty acids are bound in thioester linkage to the sulfhydryl of the prosthetic group.

It is found in the cytoplasm. It functions in the pathway lipid metabolism; fatty acid biosynthesis. Its function is as follows. Carrier of the growing fatty acid chain in fatty acid biosynthesis. The protein is Acyl carrier protein of Geobacter metallireducens (strain ATCC 53774 / DSM 7210 / GS-15).